The following is a 490-amino-acid chain: Cobyric acid synthase (490 aa).

Residues 252–439 (RLKVVVPVLP…LHGLFESTAA (188 aa)) enclose the GATase cobBQ-type domain. The active-site Nucleophile is C333. Residue H431 is part of the active site.

Belongs to the CobB/CobQ family. CobQ subfamily.

It functions in the pathway cofactor biosynthesis; adenosylcobalamin biosynthesis. Its function is as follows. Catalyzes amidations at positions B, D, E, and G on adenosylcobyrinic A,C-diamide. NH(2) groups are provided by glutamine, and one molecule of ATP is hydrogenolyzed for each amidation. This is Cobyric acid synthase from Pseudomonas aeruginosa (strain LESB58).